A 1250-amino-acid chain; its full sequence is MAKKFNYKLPSMVALTLVGSAVTAHQVQAAETTQDQTTNKNVLDSNKVKATTEQAKAEVKNPTQNISGTQVYQDPAIVQPKTANNKTGNAQVSQKVDTAQVNGDTRANQSATTNNTQPVAKSTSTTAPKTNTNVTNAGYSLVDDEDDNSENQINPELIKSAAKPAALETQYKAAAPKAATTSAPKAKTEATPKVTTFSASAQPRSVAATPKTSLPKYKPQVNSSINDYIRKNNLKAPKIEEDYTSYFPKYAYRNGVGRPEGIVVHDTANDRSTINGEISYMKNNYQNAFVHAFVDGDRIIETAPTDYLSWGVGAVGNPRFINVEIVHTHDYASFARSMNNYADYAATQLQYYGLKPDSAEYDGNGTVWTHYAVSKYLGGTDHADPHGYLRSHNYSYDQLYDLINEKYLIKMGKVAPWGTQSTTTPTTPSKPSTGKLTVAANNGVAQIKPTNSGLYTTVYDKTGKATNEVQKTFAVSKTATLGNQKFYLVQDYNSGNKFGWVKEGDVVYNTAKSPVNVNQSYSIKPGTKLYTVPWGTSKQVAGSVSGSGNQTFKASKQQQIDKSIYLYGSVNGKSGWVSKAYLVDTAKPTPTPTPKPSTPTTNNKLTVSSLNGVAQINAKNNGLFTTVYDKTGKPTKEVQKTFAVTKEASLGGNKFYLVKDYNSPTLIGWVKQGDVIYNNAKSPVNVMQTYTVKPGTKLYSVPWGTYKQEAGAVSGTGNQTFKATKQQQIDKSIYLFGTVNGKSGWVSKAYLAVPAAPKKAVAQPKTAVKAYTVTKPQTTQTVSKIAQVKPNNTGIRASVYEKTAKNGAKYADRTFYVTKERAHGNETYVLLNNTSHNIPLGWFNVKDLNVQNLGKEVKTTQKYTVNKSNNGLSMVPWGTKNQVILTGNNIAQGTFNATKQVSVGKDVYLYGTINNRTGWVNAKDLTAPTAVKPTTSAAKDYNYTYVIKNGNGYYYVTPNSDTAKYSLKAFNEQPFAVVKEQVINEQTWYYGKLSNGKLAWIKSTDLAKELIKYNQTGMTLNQVAQIQAGLQYKPQVQRVPGKWTDANFNDVKHAMDTKRLAQDPALKYQFLRLDQPQNISIDKINQFLKGKGVLENQGAAFNKAAQMYGINEVYLISHALLETGNGTSQLAKGADVVNNKVVTNSNTKYHNVFGIAAYDNDPLREGIKYAKQAGWDTVSKAIVGGAKFIGNSYVKAGQNTLYKMRWNPAHPGTHQYATDIDWANINAKIIKGYYDKIGEVGKYFDIPQYK.

Residues 1–29 (MAKKFNYKLPSMVALTLVGSAVTAHQVQA) form the signal peptide. Over residues 103–138 (GDTRANQSATTNNTQPVAKSTSTTAPKTNTNVTNAG) the composition is skewed to polar residues. Disordered regions lie at residues 103–151 (GDTR…NSEN) and 173–219 (AAAP…KYKP). The span at 173–196 (AAAPKAATTSAPKAKTEATPKVTT) shows a compositional bias: low complexity. The N-acetylmuramoyl-L-alanine amidase stretch occupies residues 199–769 (ASAQPRSVAA…AVAQPKTAVK (571 aa)). 7 GW domains span residues 437 to 511 (TVAA…YNTA), 513 to 587 (SPVN…DTAK), 606 to 680 (TVSS…YNNA), 682 to 756 (SPVN…VPAA), 778 to 853 (TTQT…VQNL), 855 to 930 (KEVK…APTA), and 937 to 1011 (AAKD…KELI). Positions 770-1250 (AYTVTKPQTT…GKYFDIPQYK (481 aa)) are endo-beta-N-acetylglucosaminidase.

This sequence in the N-terminal section; belongs to the N-acetylmuramoyl-L-alanine amidase 2 family. In the C-terminal section; belongs to the glycosyl hydrolase 73 family. Oligomer; forms a ring structure at the cell surface which is important for efficient partitioning of daughter cells after cell division. Undergoes proteolytic processing to generate the two extracellular lytic enzymes, probably at the septal region on the cell surface.

It localises to the secreted. It carries out the reaction Hydrolyzes the link between N-acetylmuramoyl residues and L-amino acid residues in certain cell-wall glycopeptides.. The catalysed reaction is an N(4)-(oligosaccharide-(1-&gt;3)-[oligosaccharide-(1-&gt;6)]-beta-D-Man-(1-&gt;4)-beta-D-GlcNAc-(1-&gt;4)-alpha-D-GlcNAc)-L-asparaginyl-[protein] + H2O = an oligosaccharide-(1-&gt;3)-[oligosaccharide-(1-&gt;6)]-beta-D-Man-(1-&gt;4)-D-GlcNAc + N(4)-(N-acetyl-beta-D-glucosaminyl)-L-asparaginyl-[protein]. Its function is as follows. Endohydrolysis of the di-N-acetylchitobiosyl unit in high-mannose glycopeptides and glycoproteins containing the -[(Man)5(GlcNAc)2]-Asn structure. One N-acetyl-D-glucosamine residue remains attached to the protein; the rest of the oligosaccharide is released intact. Cleaves the peptidoglycan connecting the daughter cells at the end of the cell division cycle, resulting in the separation of the two newly divided cells. Acts as an autolysin in penicillin-induced lysis. This chain is Bifunctional autolysin (atl), found in Staphylococcus aureus (strain MSSA476).